The following is a 463-amino-acid chain: ATP synthase subunit beta (463 aa).

152–159 (GGAGVGKT) is a binding site for ATP.

Belongs to the ATPase alpha/beta chains family. As to quaternary structure, F-type ATPases have 2 components, CF(1) - the catalytic core - and CF(0) - the membrane proton channel. CF(1) has five subunits: alpha(3), beta(3), gamma(1), delta(1), epsilon(1). CF(0) has three main subunits: a(1), b(2) and c(9-12). The alpha and beta chains form an alternating ring which encloses part of the gamma chain. CF(1) is attached to CF(0) by a central stalk formed by the gamma and epsilon chains, while a peripheral stalk is formed by the delta and b chains.

Its subcellular location is the cell inner membrane. It carries out the reaction ATP + H2O + 4 H(+)(in) = ADP + phosphate + 5 H(+)(out). Produces ATP from ADP in the presence of a proton gradient across the membrane. The catalytic sites are hosted primarily by the beta subunits. The chain is ATP synthase subunit beta from Shewanella oneidensis (strain ATCC 700550 / JCM 31522 / CIP 106686 / LMG 19005 / NCIMB 14063 / MR-1).